The following is a 543-amino-acid chain: Type I restriction enzyme MpnII methylase subunit (543 aa).

S-adenosyl-L-methionine is bound by residues 208 to 213 (EFFTPQ), 240 to 242 (SGS), and E265.

This sequence belongs to the N(4)/N(6)-methyltransferase family. The methyltransferase is composed of M and S polypeptides.

The catalysed reaction is a 2'-deoxyadenosine in DNA + S-adenosyl-L-methionine = an N(6)-methyl-2'-deoxyadenosine in DNA + S-adenosyl-L-homocysteine + H(+). Functionally, the subtype gamma methyltransferase (M) subunit of a type I restriction enzyme. The M and S subunits together form a methyltransferase (MTase) that probably methylates A-2 on the top strand and A-3 on the bottom strand of the sequence 5'-GAN(7)TAY-3'. As the bacterial DNA is methylated on this sequence and this is the only type I methylase in the genome, it is probably responsible for all of the methylation on this site in the genome. The R subunit has multiple frameshifts and is probably not expressed in this bacteria. The polypeptide is Type I restriction enzyme MpnII methylase subunit (Mycoplasma pneumoniae (strain ATCC 29342 / M129 / Subtype 1) (Mycoplasmoides pneumoniae)).